Here is a 1597-residue protein sequence, read N- to C-terminus: Pentafunctional AROM polypeptide (1597 aa).

The segment at M1–N384 is 3-dehydroquinate synthase. Residues D44–N46, E81–K84, G114–V116, and D119 each bind NAD(+). Position 130 (R130) interacts with 7-phospho-2-dehydro-3-deoxy-D-arabino-heptonate. T139–T140 lines the NAD(+) pocket. Residues D146 and K152 each coordinate 7-phospho-2-dehydro-3-deoxy-D-arabino-heptonate. K161 is an NAD(+) binding site. N162 provides a ligand contact to 7-phospho-2-dehydro-3-deoxy-D-arabino-heptonate. Residues F179–T182 and N190 each bind NAD(+). E194 serves as a coordination point for Zn(2+). 7-phospho-2-dehydro-3-deoxy-D-arabino-heptonate-binding positions include E194 to K197 and K250. Residue E260 is the Proton acceptor; for 3-dehydroquinate synthase activity of the active site. Residues R264–N268 and H271 contribute to the 7-phospho-2-dehydro-3-deoxy-D-arabino-heptonate site. H271 is a binding site for Zn(2+). The Proton acceptor; for 3-dehydroquinate synthase activity role is filled by H275. Positions 287 and 356 each coordinate 7-phospho-2-dehydro-3-deoxy-D-arabino-heptonate. H287 serves as a coordination point for Zn(2+). The tract at residues V397–V842 is EPSP synthase. The For EPSP synthase activity role is filled by C824. The segment at A866–S1057 is shikimate kinase. Position 872–879 (G872–T879) interacts with ATP. The 3-dehydroquinase stretch occupies residues L1058–E1278. H1181 serves as the catalytic Proton acceptor; for 3-dehydroquinate dehydratase activity. K1209 acts as the Schiff-base intermediate with substrate; for 3-dehydroquinate dehydratase activity in catalysis. Residues S1291 to T1597 form a shikimate dehydrogenase region.

In the N-terminal section; belongs to the sugar phosphate cyclases superfamily. Dehydroquinate synthase family. This sequence in the 2nd section; belongs to the EPSP synthase family. It in the 3rd section; belongs to the shikimate kinase family. The protein in the 4th section; belongs to the type-I 3-dehydroquinase family. In the C-terminal section; belongs to the shikimate dehydrogenase family. In terms of assembly, homodimer. Requires Zn(2+) as cofactor.

It is found in the cytoplasm. It carries out the reaction 7-phospho-2-dehydro-3-deoxy-D-arabino-heptonate = 3-dehydroquinate + phosphate. The catalysed reaction is 3-dehydroquinate = 3-dehydroshikimate + H2O. The enzyme catalyses shikimate + NADP(+) = 3-dehydroshikimate + NADPH + H(+). It catalyses the reaction shikimate + ATP = 3-phosphoshikimate + ADP + H(+). It carries out the reaction 3-phosphoshikimate + phosphoenolpyruvate = 5-O-(1-carboxyvinyl)-3-phosphoshikimate + phosphate. The protein operates within metabolic intermediate biosynthesis; chorismate biosynthesis; chorismate from D-erythrose 4-phosphate and phosphoenolpyruvate: step 2/7. It participates in metabolic intermediate biosynthesis; chorismate biosynthesis; chorismate from D-erythrose 4-phosphate and phosphoenolpyruvate: step 3/7. It functions in the pathway metabolic intermediate biosynthesis; chorismate biosynthesis; chorismate from D-erythrose 4-phosphate and phosphoenolpyruvate: step 4/7. Its pathway is metabolic intermediate biosynthesis; chorismate biosynthesis; chorismate from D-erythrose 4-phosphate and phosphoenolpyruvate: step 5/7. The protein operates within metabolic intermediate biosynthesis; chorismate biosynthesis; chorismate from D-erythrose 4-phosphate and phosphoenolpyruvate: step 6/7. Its function is as follows. The AROM polypeptide catalyzes 5 consecutive enzymatic reactions in prechorismate polyaromatic amino acid biosynthesis. The protein is Pentafunctional AROM polypeptide of Ajellomyces dermatitidis (strain ER-3 / ATCC MYA-2586) (Blastomyces dermatitidis).